We begin with the raw amino-acid sequence, 344 residues long: CRISPR-associated endonuclease Cas1 2 (344 aa).

Mn(2+)-binding residues include Glu-167, His-235, and Glu-250.

This sequence belongs to the CRISPR-associated endonuclease Cas1 family. Homodimer, forms a heterotetramer with a Cas2 homodimer. The cofactor is Mg(2+). It depends on Mn(2+) as a cofactor.

Functionally, CRISPR (clustered regularly interspaced short palindromic repeat), is an adaptive immune system that provides protection against mobile genetic elements (viruses, transposable elements and conjugative plasmids). CRISPR clusters contain spacers, sequences complementary to antecedent mobile elements, and target invading nucleic acids. CRISPR clusters are transcribed and processed into CRISPR RNA (crRNA). Acts as a dsDNA endonuclease. Involved in the integration of spacer DNA into the CRISPR cassette. This is CRISPR-associated endonuclease Cas1 2 from Rhodospirillum rubrum (strain ATCC 11170 / ATH 1.1.1 / DSM 467 / LMG 4362 / NCIMB 8255 / S1).